A 319-amino-acid chain; its full sequence is Histone-lysine N-methyltransferase set5 (319 aa).

Residues 4 to 141 (YETEIYKVVP…AGEEILTTYI (138 aa)) enclose the SET domain. Ser316 is subject to Phosphoserine. Thr318 carries the post-translational modification Phosphothreonine.

Belongs to the class V-like SAM-binding methyltransferase superfamily.

The protein localises to the nucleus. The protein resides in the chromosome. It is found in the cytoplasm. The catalysed reaction is L-lysyl-[histone] + S-adenosyl-L-methionine = N(6)-methyl-L-lysyl-[histone] + S-adenosyl-L-homocysteine + H(+). Functionally, histone methyltransferase that monomethylates 'Lys-5', 'Lys-8' and 'Lys-12' of histone H4 (H4K5me1, H4K8me1 and H4K12me1, respectively), thereby controlling gene expression and remodeling chromatin structures. Monomethylation of 'Lys-5' of histone H4 (H4K5me1) is required for subsequent acetylation and formation of N6-acetyl-N6-methyllysine (H4K5acme). This chain is Histone-lysine N-methyltransferase set5 (set5), found in Schizosaccharomyces pombe (strain 972 / ATCC 24843) (Fission yeast).